The chain runs to 178 residues: Large ribosomal subunit protein uL6 (178 aa).

This sequence belongs to the universal ribosomal protein uL6 family. Part of the 50S ribosomal subunit.

In terms of biological role, this protein binds to the 23S rRNA, and is important in its secondary structure. It is located near the subunit interface in the base of the L7/L12 stalk, and near the tRNA binding site of the peptidyltransferase center. The chain is Large ribosomal subunit protein uL6 from Staphylococcus aureus (strain Mu3 / ATCC 700698).